We begin with the raw amino-acid sequence, 206 residues long: Uridine kinase (206 aa).

Position 11–18 (11–18 (GGTGSGKS)) interacts with ATP.

This sequence belongs to the uridine kinase family.

The protein resides in the cytoplasm. The enzyme catalyses uridine + ATP = UMP + ADP + H(+). The catalysed reaction is cytidine + ATP = CMP + ADP + H(+). The protein operates within pyrimidine metabolism; CTP biosynthesis via salvage pathway; CTP from cytidine: step 1/3. Its pathway is pyrimidine metabolism; UMP biosynthesis via salvage pathway; UMP from uridine: step 1/1. The polypeptide is Uridine kinase (Clostridium botulinum (strain Kyoto / Type A2)).